A 128-amino-acid chain; its full sequence is Large ribosomal subunit protein bL12 (128 aa).

It belongs to the bacterial ribosomal protein bL12 family. As to quaternary structure, homodimer. Part of the ribosomal stalk of the 50S ribosomal subunit. Forms a multimeric L10(L12)X complex, where L10 forms an elongated spine to which 2 to 4 L12 dimers bind in a sequential fashion. Binds GTP-bound translation factors.

Functionally, forms part of the ribosomal stalk which helps the ribosome interact with GTP-bound translation factors. Is thus essential for accurate translation. In Synechocystis sp. (strain ATCC 27184 / PCC 6803 / Kazusa), this protein is Large ribosomal subunit protein bL12.